We begin with the raw amino-acid sequence, 367 residues long: tRNA uridine(34) hydroxylase (367 aa).

The region spanning 159-253 (EDENSIVVDV…YAHEVSQKGL (95 aa)) is the Rhodanese domain. Catalysis depends on Cys-213, which acts as the Cysteine persulfide intermediate.

It belongs to the TrhO family.

The enzyme catalyses uridine(34) in tRNA + AH2 + O2 = 5-hydroxyuridine(34) in tRNA + A + H2O. In terms of biological role, catalyzes oxygen-dependent 5-hydroxyuridine (ho5U) modification at position 34 in tRNAs. The polypeptide is tRNA uridine(34) hydroxylase (Leptospira interrogans serogroup Icterohaemorrhagiae serovar Lai (strain 56601)).